A 316-amino-acid polypeptide reads, in one-letter code: IDS-like terpene synthase 2 (316 aa).

Positions 69 and 73 each coordinate Mg(2+).

It belongs to the FPP/GGPP synthase family. The cofactor is Mg(2+).

It carries out the reaction (2E)-geranyl diphosphate + H2O = linalool + diphosphate. The enzyme catalyses (2E,6E)-farnesyl diphosphate + H2O = (6E)-nerolidol + diphosphate. In terms of biological role, terpene synthase that shows monoterpene synthase activity and produces linalool, using geranyl diphosphate (GPP) as substrate. Also shows sesquiterpene synthase activity as it is able to convert farnesyl diphosphate (FPP) into (E)-nerolidol. The protein is IDS-like terpene synthase 2 of Melampsora larici-populina (strain 98AG31 / pathotype 3-4-7) (Poplar leaf rust fungus).